We begin with the raw amino-acid sequence, 353 residues long: D-alanine--D-alanine ligase (353 aa).

An ATP-grasp domain is found at 141-349; the sequence is KAALAGAGLA…LEQLVHELLE (209 aa). Position 176-231 (176-231) interacts with ATP; that stretch reads ESGLCYPCFIKPANLGSSVGISKARNREELIHGLRLAATLDPRLVVEQGVQARELE. Asp302, Glu316, and Asn318 together coordinate Mg(2+).

Belongs to the D-alanine--D-alanine ligase family. Mg(2+) is required as a cofactor. It depends on Mn(2+) as a cofactor.

It localises to the cytoplasm. The catalysed reaction is 2 D-alanine + ATP = D-alanyl-D-alanine + ADP + phosphate + H(+). The protein operates within cell wall biogenesis; peptidoglycan biosynthesis. In terms of biological role, cell wall formation. This chain is D-alanine--D-alanine ligase, found in Parasynechococcus marenigrum (strain WH8102).